Here is a 156-residue protein sequence, read N- to C-terminus: Small ribosomal subunit protein uS10m (156 aa).

This sequence belongs to the universal ribosomal protein uS10 family.

The protein resides in the mitochondrion. Ribosomal protein required for normal mitochondrial function and normal larval development. Thought to have a role in insulin/IGF signaling. This Caenorhabditis elegans protein is Small ribosomal subunit protein uS10m (mrps-10).